A 462-amino-acid chain; its full sequence is Glycine--tRNA ligase (462 aa).

Arg-100 and Glu-170 together coordinate substrate. ATP is bound by residues 202 to 204 (RNE), 212 to 217 (FRTREF), 287 to 288 (EL), and 331 to 334 (GVER). 217 to 221 (FEQME) is a binding site for substrate. Residue 327 to 331 (EPSVG) participates in substrate binding.

The protein belongs to the class-II aminoacyl-tRNA synthetase family. In terms of assembly, homodimer.

Its subcellular location is the cytoplasm. The catalysed reaction is tRNA(Gly) + glycine + ATP = glycyl-tRNA(Gly) + AMP + diphosphate. Its function is as follows. Catalyzes the attachment of glycine to tRNA(Gly). In Malacoplasma penetrans (strain HF-2) (Mycoplasma penetrans), this protein is Glycine--tRNA ligase.